Here is a 289-residue protein sequence, read N- to C-terminus: RING-H2 finger protein ATL30 (289 aa).

Residues 26–46 (VIILTVILLVVFFIGFFAIYF) traverse the membrane as a helical segment. The segment at 114–157 (CAICLLEFEEEHILLRLLTTCYHVFHQECIDQWLESNKTCPVCR) adopts an RING-type; atypical zinc-finger fold. A disordered region spans residues 181-206 (HENRDQEQTSTSNEVMLSRQSSGNNE). A compositionally biased stretch (polar residues) spans 188–204 (QTSTSNEVMLSRQSSGN).

Belongs to the RING-type zinc finger family. ATL subfamily.

The protein localises to the membrane. The catalysed reaction is S-ubiquitinyl-[E2 ubiquitin-conjugating enzyme]-L-cysteine + [acceptor protein]-L-lysine = [E2 ubiquitin-conjugating enzyme]-L-cysteine + N(6)-ubiquitinyl-[acceptor protein]-L-lysine.. Its pathway is protein modification; protein ubiquitination. The protein is RING-H2 finger protein ATL30 (ATL30) of Arabidopsis thaliana (Mouse-ear cress).